Here is a 347-residue protein sequence, read N- to C-terminus: Phosphate acyltransferase (347 aa).

It belongs to the PlsX family. As to quaternary structure, homodimer. Probably interacts with PlsY.

It is found in the cytoplasm. It catalyses the reaction a fatty acyl-[ACP] + phosphate = an acyl phosphate + holo-[ACP]. It participates in lipid metabolism; phospholipid metabolism. In terms of biological role, catalyzes the reversible formation of acyl-phosphate (acyl-PO(4)) from acyl-[acyl-carrier-protein] (acyl-ACP). This enzyme utilizes acyl-ACP as fatty acyl donor, but not acyl-CoA. This Oleidesulfovibrio alaskensis (strain ATCC BAA-1058 / DSM 17464 / G20) (Desulfovibrio alaskensis) protein is Phosphate acyltransferase.